Here is a 503-residue protein sequence, read N- to C-terminus: Transmembrane prolyl 4-hydroxylase (503 aa).

Residues methionine 1–proline 49 are disordered. The Cytoplasmic segment spans residues methionine 1 to tyrosine 61. The helical; Signal-anchor for type II membrane protein transmembrane segment at phenylalanine 62–phenylalanine 82 threads the bilayer. Over valine 83–leucine 503 the chain is Lumenal. Residues glutamate 90–glycine 110 are disordered. 2 EF-hand domains span residues alanine 186–arginine 221 and proline 225–lysine 260. Ca(2+) is bound by residues aspartate 199, asparagine 201, aspartate 203, arginine 205, glutamate 210, aspartate 238, aspartate 240, aspartate 242, and glutamate 249. In terms of domain architecture, Fe2OG dioxygenase spans glutamate 310–valine 461. Positions 329 and 331 each coordinate Fe cation. Residues asparagine 349 and asparagine 369 are each glycosylated (N-linked (GlcNAc...) asparagine). Residue glutamate 375 coordinates Fe cation. Asparagine 383 carries an N-linked (GlcNAc...) asparagine glycan. Residue lysine 452 participates in 2-oxoglutarate binding.

In terms of assembly, homodimer. Fe(2+) is required as a cofactor. L-ascorbate serves as cofactor. Post-translationally, glycosylated. Highest expression levels are detected in the eye and brain, especially in the retinal epithelium cells and cortical neurons. Also expressed in skeletal muscle, lung, heart, adrenal gland, kidney, prostate, thyroid and testis.

The protein resides in the endoplasmic reticulum membrane. The enzyme catalyses L-prolyl-[hypoxia-inducible factor alpha subunit] + 2-oxoglutarate + O2 = trans-4-hydroxy-L-prolyl-[hypoxia-inducible factor alpha subunit] + succinate + CO2. In terms of biological role, catalyzes the post-translational formation of 4-hydroxyproline in hypoxia-inducible factor (HIF) alpha proteins. Hydroxylates HIF1A at 'Pro-402' and 'Pro-564'. May function as a cellular oxygen sensor and, under normoxic conditions, may target HIF through the hydroxylation for proteasomal degradation via the von Hippel-Lindau ubiquitination complex. The chain is Transmembrane prolyl 4-hydroxylase (P4htm) from Mus musculus (Mouse).